The sequence spans 377 residues: tRNA-specific 2-thiouridylase MnmA (377 aa).

ATP-binding positions include 8–15 and M34; that span reads GMSGGVDS. The segment at 94–96 is interaction with target base in tRNA; sequence NPD. Residue C99 is the Nucleophile of the active site. A disulfide bridge connects residues C99 and C201. An ATP-binding site is contributed by G123. The interaction with tRNA stretch occupies residues 151 to 153; sequence KDQ. Residue C201 is the Cysteine persulfide intermediate of the active site. An interaction with tRNA region spans residues 315 to 316; sequence RY.

It belongs to the MnmA/TRMU family.

The protein resides in the cytoplasm. The catalysed reaction is S-sulfanyl-L-cysteinyl-[protein] + uridine(34) in tRNA + AH2 + ATP = 2-thiouridine(34) in tRNA + L-cysteinyl-[protein] + A + AMP + diphosphate + H(+). Catalyzes the 2-thiolation of uridine at the wobble position (U34) of tRNA, leading to the formation of s(2)U34. This is tRNA-specific 2-thiouridylase MnmA from Acinetobacter baumannii (strain SDF).